The sequence spans 125 residues: Large ribosomal subunit protein bL12 (125 aa).

In terms of assembly, homodimer. Part of the ribosomal stalk of the 50S ribosomal subunit. Forms a multimeric L10(L12)X complex, where L10 forms an elongated spine to which 2 to 4 L12 dimers bind in a sequential fashion. Binds GTP-bound translation factors. Two isoforms seem to exist. One is probably dimethylated on Lys-69 and monomethylated on Lys-86 while the other is probably acetylated or trimethylated on both Lys-86 and Lys-89.

Its function is as follows. Forms part of the ribosomal stalk which helps the ribosome interact with GTP-bound translation factors. Is thus essential for accurate translation. This Rhodopseudomonas palustris (strain ATCC BAA-98 / CGA009) protein is Large ribosomal subunit protein bL12.